We begin with the raw amino-acid sequence, 30 residues long: MRFLFFLPPSFITSFLYLALYSFPVPYCII.

The first 22 residues, 1–22, serve as a signal peptide directing secretion; the sequence is MRFLFFLPPSFITSFLYLALYS.

This is an uncharacterized protein from Schizosaccharomyces pombe (strain 972 / ATCC 24843) (Fission yeast).